Reading from the N-terminus, the 147-residue chain is Small nuclear ribonucleoprotein-associated protein B (147 aa).

Positions 1–84 constitute a Sm domain; the sequence is MGTTKMVSLL…IVSLSVQGPP (84 aa). Disordered regions lie at residues 87 to 106 and 128 to 147; these read DPSMRGSLLSGPGVARPAGR and APPPPAGFGRGAPPPGFRPV.

It belongs to the snRNP SmB/SmN family. As to quaternary structure, belongs to the 40S cdc5-associated complex (or cwf complex), a spliceosome sub-complex reminiscent of a late-stage spliceosome composed of the U2, U5 and U6 snRNAs and at least brr2, cdc5, cwf2/prp3, cwf3/syf1, cwf4/syf3, cwf5/ecm2, spp42/cwf6, cwf7/spf27, cwf8, cwf9, cwf10, cwf11, cwf12, prp45/cwf13, cwf14, cwf15, cwf16, cwf17, cwf18, cwf19, cwf20, cwf21, cwf22, cwf23, cwf24, cwf25, cwf26, cyp7/cwf27, cwf28, cwf29/ist3, lea1, msl1, prp5/cwf1, prp10, prp12/sap130, prp17, prp22, sap61, sap62, sap114, sap145, slu7, smb1, smd1, smd3, smf1, smg1 and syf2.

The protein resides in the nucleus. The protein localises to the cytoplasm. Plays a role in pre-mRNA splicing as a core component of the spliceosomal U1, U2, U4 and U5 small nuclear ribonucleoproteins (snRNPs), the building blocks of the spliceosome. The chain is Small nuclear ribonucleoprotein-associated protein B (smb1) from Schizosaccharomyces pombe (strain 972 / ATCC 24843) (Fission yeast).